A 215-amino-acid chain; its full sequence is Cytochrome b6 (215 aa).

The chain crosses the membrane as a helical span at residues 32–52 (IFYCLGGITFTCFLLQVASGF). Cys-35 provides a ligand contact to heme c. 2 residues coordinate heme b: His-86 and His-100. The next 3 membrane-spanning stretches (helical) occupy residues 90–110 (ASMM…TGGF), 116–136 (LTWV…VTGY), and 186–206 (LHTF…FLMI). Heme b is bound by residues His-187 and His-202.

Belongs to the cytochrome b family. PetB subfamily. As to quaternary structure, the 4 large subunits of the cytochrome b6-f complex are cytochrome b6, subunit IV (17 kDa polypeptide, PetD), cytochrome f and the Rieske protein, while the 4 small subunits are PetG, PetL, PetM and PetN. The complex functions as a dimer. The cofactor is heme b. It depends on heme c as a cofactor.

It localises to the plastid. The protein localises to the chloroplast thylakoid membrane. Functionally, component of the cytochrome b6-f complex, which mediates electron transfer between photosystem II (PSII) and photosystem I (PSI), cyclic electron flow around PSI, and state transitions. This chain is Cytochrome b6, found in Coleochaete orbicularis (Charophycean green alga).